The chain runs to 20 residues: Protease inhibitor (20 aa).

Monomer. In terms of processing, glycosylated. As to expression, stored in epidermis and secreted into the hemolymph and cuticle. Not detected in the interior of the epidermis, fat body cells or columnar or goblet cells of the midgut epithelium (at protein level).

Functionally, inhibits trypsin and chymotrypsin. The protein is Protease inhibitor of Antheraea mylitta (Tasar silkworm).